We begin with the raw amino-acid sequence, 254 residues long: Phosphoribosylaminoimidazole-succinocarboxamide synthase (254 aa).

It belongs to the SAICAR synthetase family.

It catalyses the reaction 5-amino-1-(5-phospho-D-ribosyl)imidazole-4-carboxylate + L-aspartate + ATP = (2S)-2-[5-amino-1-(5-phospho-beta-D-ribosyl)imidazole-4-carboxamido]succinate + ADP + phosphate + 2 H(+). Its pathway is purine metabolism; IMP biosynthesis via de novo pathway; 5-amino-1-(5-phospho-D-ribosyl)imidazole-4-carboxamide from 5-amino-1-(5-phospho-D-ribosyl)imidazole-4-carboxylate: step 1/2. The chain is Phosphoribosylaminoimidazole-succinocarboxamide synthase from Rhizobium meliloti (strain 1021) (Ensifer meliloti).